The chain runs to 265 residues: Cytoplasmic envelopment protein 1 (265 aa).

Belongs to the herpesviridae cytoplasmic envelopment protein 1 family.

It is found in the virion. The protein localises to the virion tegument. The protein resides in the host cytoplasm. It localises to the host Golgi apparatus. Its function is as follows. Plays a critical role in cytoplasmic virus egress. Participates in the final step of tegumentation and envelope acquisition within the host cytoplasm. In Saimiriine herpesvirus 2 (strain 11) (SaHV-2), this protein is Cytoplasmic envelopment protein 1 (42).